Consider the following 444-residue polypeptide: Enolase 2 (444 aa).

2 residues coordinate substrate: histidine 165 and glutamate 174. The Proton donor role is filled by glutamate 217. The Mg(2+) site is built by aspartate 252, glutamate 303, and aspartate 330. The substrate site is built by glutamate 303 and aspartate 330. Lysine 355 functions as the Proton acceptor in the catalytic mechanism. Residues 382 to 385 (SHRS) and lysine 406 each bind substrate.

This sequence belongs to the enolase family. In terms of assembly, homodimer. Mg(2+) is required as a cofactor.

It is found in the cytoplasm. It carries out the reaction (2R)-2-phosphoglycerate = phosphoenolpyruvate + H2O. The protein operates within carbohydrate degradation; glycolysis; pyruvate from D-glyceraldehyde 3-phosphate: step 4/5. This chain is Enolase 2 (ENO2), found in Toxoplasma gondii.